The primary structure comprises 134 residues: Transmembrane protein 100 (134 aa).

Helical transmembrane passes span 56–76 (CIIP…AVAY) and 84–104 (IISI…ASSA). Phosphoserine is present on Ser-121.

As to quaternary structure, interacts (via C-terminus) with TRPA1 and TRPV1. Interacts with TASOR. Expressed in neurons of the myenteric and submucosal plexuses in the gastric body, jejunum and proximal colon. Expressed in arterial endothelial cells and neurons of the central nervous system and peripheral nervous system. Expressed in umbilical artery endothelial cells (at protein level).

The protein localises to the cell membrane. Its subcellular location is the membrane. The protein resides in the perikaryon. It localises to the cytoplasm. It is found in the perinuclear region. The protein localises to the endoplasmic reticulum. Functionally, plays a role during embryonic arterial endothelium differentiation and vascular morphogenesis through the ACVRL1 receptor-dependent signaling pathway upon stimulation by bone morphogenetic proteins, such as GDF2/BMP9 and BMP10. Involved in the regulation of nociception, acting as a modulator of the interaction between TRPA1 and TRPV1, two molecular sensors and mediators of pain signals in dorsal root ganglia (DRG) neurons. Mechanistically, it weakens their interaction, thereby releasing the inhibition of TRPA1 by TRPV1 and increasing the single-channel open probability of the TRPA1-TRPV1 complex. The polypeptide is Transmembrane protein 100 (TMEM100) (Homo sapiens (Human)).